A 518-amino-acid chain; its full sequence is MFS-type transporter cnsO (518 aa).

Positions 1-13 are enriched in polar residues; the sequence is MESTDSSPPLSMT. Residues 1 to 24 form a disordered region; that stretch reads MESTDSSPPLSMTDTEKKGDAVTT. 9 helical membrane-spanning segments follow: residues 99–119, 122–142, 156–176, 187–207, 221–241, 298–318, 334–354, 362–382, and 392–412; these read LALM…NIML, VGPK…TTLT, LMLG…LSMW, AIFY…AYGV, WLFL…LFCL, FMMM…SYTL, VMTT…GYIS, LCIM…WITV, and YFAI…VGAW. An N-linked (GlcNAc...) asparagine glycan is attached at Asn-416. 2 consecutive transmembrane segments (helical) span residues 427 to 447 and 455 to 475; these read IGLL…NIYI and PLGF…PATI.

Belongs to the major facilitator superfamily.

It is found in the cell membrane. Its function is as follows. MFS-type transporter; part of the gene cluster that mediates the biosynthesis of communesins, a prominent class of indole alkaloids with great potential as pharmaceuticals. With the MFS transporter cnsL, is most likely responsible for cummunesins secretion and thereby may contribute to intrinsic resistance. The chain is MFS-type transporter cnsO from Penicillium expansum (Blue mold rot fungus).